We begin with the raw amino-acid sequence, 130 residues long: Ribonuclease VapC22 (130 aa).

One can recognise a PINc domain in the interval 4–119 (VLLDSHVAYW…RLVTKDRRLR (116 aa)). Mg(2+) contacts are provided by D7 and D97.

The protein belongs to the PINc/VapC protein family. It depends on Mg(2+) as a cofactor.

Its subcellular location is the secreted. Its function is as follows. Toxic component of a type II toxin-antitoxin (TA) system. An RNase. Upon expression in M.smegmatis inhibits translation and colony formation. Its toxic effect on colony formation is neutralized by coexpression with cognate antitoxin VapB22; the effect on translation has not been tested but is probably neutralized also. The chain is Ribonuclease VapC22 from Mycobacterium tuberculosis (strain ATCC 25618 / H37Rv).